The chain runs to 363 residues: tRNA/tmRNA (uracil-C(5))-methyltransferase (363 aa).

Residues Gln-187, Tyr-215, Asn-220, Glu-236, and Asp-296 each contribute to the S-adenosyl-L-methionine site. Cys-321 (nucleophile) is an active-site residue. Catalysis depends on Glu-355, which acts as the Proton acceptor.

Belongs to the class I-like SAM-binding methyltransferase superfamily. RNA M5U methyltransferase family. TrmA subfamily.

It carries out the reaction uridine(54) in tRNA + S-adenosyl-L-methionine = 5-methyluridine(54) in tRNA + S-adenosyl-L-homocysteine + H(+). The enzyme catalyses uridine(341) in tmRNA + S-adenosyl-L-methionine = 5-methyluridine(341) in tmRNA + S-adenosyl-L-homocysteine + H(+). Its function is as follows. Dual-specificity methyltransferase that catalyzes the formation of 5-methyluridine at position 54 (m5U54) in all tRNAs, and that of position 341 (m5U341) in tmRNA (transfer-mRNA). This is tRNA/tmRNA (uracil-C(5))-methyltransferase from Pseudomonas aeruginosa (strain LESB58).